The following is a 324-amino-acid chain: Dolichyl-phosphate beta-glucosyltransferase (324 aa).

The Lumenal portion of the chain corresponds to 1–7; the sequence is MAPLLLQ. The helical; Signal-anchor for type II membrane protein transmembrane segment at 8–28 threads the bilayer; it reads LAVLGAALAAAALVLISIVAF. The Cytoplasmic portion of the chain corresponds to 29–324; that stretch reads TTATKMPALH…WRLEQTRKMN (296 aa).

This sequence belongs to the glycosyltransferase 2 family. As to expression, expressed in pancreas, placenta, liver, heart, brain, kidney, skeletal muscle, and lung.

Its subcellular location is the endoplasmic reticulum membrane. The catalysed reaction is a di-trans,poly-cis-dolichyl phosphate + UDP-alpha-D-glucose = a di-trans,poly-cis-dolichyl beta-D-glucosyl phosphate + UDP. It functions in the pathway protein modification; protein glycosylation. In terms of biological role, dolichyl-phosphate beta-glucosyltransferase that operates in the biosynthetic pathway of dolichol-linked oligosaccharides, the glycan precursors employed in protein asparagine (N)-glycosylation. The assembly of dolichol-linked oligosaccharides begins on the cytosolic side of the endoplasmic reticulum membrane and finishes in its lumen. The sequential addition of sugars to dolichol pyrophosphate produces dolichol-linked oligosaccharides containing fourteen sugars, including two GlcNAcs, nine mannoses and three glucoses. Once assembled, the oligosaccharide is transferred from the lipid to nascent proteins by oligosaccharyltransferases. Dolichyl-phosphate beta-glucosyltransferase produces dolichyl beta-D-glucosyl phosphate/Dol-P-Glc, the glucose donor substrate used sequentially by ALG6, ALG8 and ALG10 to add glucose residues on top of the Man(9)GlcNAc(2)-PP-Dol structure. These are the three last steps in the biosynthetic pathway of dolichol-linked oligosaccharides to produce Glc(3)Man(9)GlcNAc(2)-PP-Dol. The enzyme is most probably active on the cytoplasmic side of the endoplasmic reticulum while its product Dol-P-Glc is the substrate for ALG6, ALG8 and ALG11 in the lumen of the endoplasmic reticulum. The chain is Dolichyl-phosphate beta-glucosyltransferase from Homo sapiens (Human).